The sequence spans 122 residues: Large ribosomal subunit protein uL14 (122 aa).

The protein belongs to the universal ribosomal protein uL14 family. As to quaternary structure, part of the 50S ribosomal subunit. Forms a cluster with proteins L3 and L19. In the 70S ribosome, L14 and L19 interact and together make contacts with the 16S rRNA in bridges B5 and B8.

Functionally, binds to 23S rRNA. Forms part of two intersubunit bridges in the 70S ribosome. The sequence is that of Large ribosomal subunit protein uL14 from Ectopseudomonas mendocina (strain ymp) (Pseudomonas mendocina).